The following is a 270-amino-acid chain: 3-phenylpropionate-dihydrodiol/cinnamic acid-dihydrodiol dehydrogenase (270 aa).

10-34 contacts NAD(+); it reads FITGGGSGLGLALVERFIEEGAQVA. Ser143 lines the substrate pocket. Tyr156 (proton acceptor) is an active-site residue.

This sequence belongs to the short-chain dehydrogenases/reductases (SDR) family.

It carries out the reaction 3-(cis-5,6-dihydroxycyclohexa-1,3-dien-1-yl)propanoate + NAD(+) = 3-(2,3-dihydroxyphenyl)propanoate + NADH + H(+). The enzyme catalyses (2E)-3-(cis-5,6-dihydroxycyclohexa-1,3-dien-1-yl)prop-2-enoate + NAD(+) = (2E)-3-(2,3-dihydroxyphenyl)prop-2-enoate + NADH + H(+). Its pathway is aromatic compound metabolism; 3-phenylpropanoate degradation. In terms of biological role, converts 3-phenylpropionate-dihydrodiol (PP-dihydrodiol) and cinnamic acid-dihydrodiol (CI-dihydrodiol) into 3-(2,3-dihydroxylphenyl)propanoic acid (DHPP) and 2,3-dihydroxicinnamic acid (DHCI), respectively. The chain is 3-phenylpropionate-dihydrodiol/cinnamic acid-dihydrodiol dehydrogenase from Escherichia coli O17:K52:H18 (strain UMN026 / ExPEC).